A 221-amino-acid chain; its full sequence is Beta-phosphoglucomutase (221 aa).

Aspartate 8 functions as the Nucleophile in the catalytic mechanism. Residues aspartate 8 and aspartate 10 each contribute to the Mg(2+) site. Residue aspartate 8 is modified to 4-aspartylphosphate. Catalysis depends on aspartate 10, which acts as the Proton donor/acceptor. Beta-D-glucose 6-phosphate contacts are provided by aspartate 10, glycine 46, valine 47, arginine 49, serine 116, lysine 117, and asparagine 118. Residue aspartate 170 participates in Mg(2+) binding.

The protein belongs to the HAD-like hydrolase superfamily. CbbY/CbbZ/Gph/YieH family. In terms of assembly, monomer. Requires Mg(2+) as cofactor. In terms of processing, autophosphorylated.

The protein resides in the cytoplasm. The catalysed reaction is beta-D-glucose 1-phosphate = beta-D-glucose 6-phosphate. Activated by phosphorylation. Competitively inhibited by alpha-D-galactose-1-phosphate. Functionally, catalyzes the interconversion of D-glucose 1-phosphate (G1P) and D-glucose 6-phosphate (G6P), forming beta-D-glucose 1,6-(bis)phosphate (beta-G16P) as an intermediate. The beta-phosphoglucomutase (Beta-PGM) acts on the beta-C(1) anomer of G1P. Glucose or lactose are used in preference to maltose, which is only utilized after glucose or lactose has been exhausted. It plays a key role in the regulation of the flow of carbohydrate intermediates in glycolysis and the formation of the sugar nucleotide UDP-glucose. The polypeptide is Beta-phosphoglucomutase (Lactococcus lactis subsp. lactis (strain IL1403) (Streptococcus lactis)).